The primary structure comprises 222 residues: Vespryn (222 aa).

An N-terminal signal peptide occupies residues 1–44 (MSPSAGLQFSLYFLQTKKVLWKLTDKEKGLCYILLFTLCFFADQ). Positions 45–52 (ENGGKALA) are excised as a propeptide. The 107-residue stretch at 53–159 (SPPGIWKRAD…RIWQMGLWWL (107 aa)) folds into the B30.2/SPRY domain. A propeptide spanning residues 160–222 (RHLETDPGRV…LGGTVSLTTL (63 aa)) is cleaved from the precursor. Asn-195 carries N-linked (GlcNAc...) asparagine glycosylation.

This sequence belongs to the ohanin/vespryn family. As to expression, expressed by the venom gland.

Its subcellular location is the secreted. Functionally, neurotoxin that produces dose-dependent hypolocomotion and hyperalgesia in mice. May directly act on the central nervous system, as it is 6500-fold more potent when administered intracerebroventricularly than intraperitoneal. The protein is Vespryn of Crotalus adamanteus (Eastern diamondback rattlesnake).